Here is a 524-residue protein sequence, read N- to C-terminus: DNA damage-binding protein CMR1 (524 aa).

The disordered stretch occupies residues 35–79; the sequence is EKIIPKPAPPKPKRASAPRAKREPVKRETARPTRQSSRLAGLDAD. Basic and acidic residues predominate over residues 54 to 65; sequence AKREPVKRETAR. WD repeat units lie at residues 184–225, 245–285, 295–332, 336–376, 385–425, 447–490, and 493–524; these read LVPQ…VKAE, THSR…STEA, LPISAIDMPTSDPNMIIFSTLQGTLGRHDLRTKSSTAE, LTDQ…GKGD, THDS…KWTA, GRWV…LAQL, and DGITAVPAVAHFHPTMDWVAGGNGSGKLCLWM.

The protein belongs to the WD repeat DDB2/WDR76 family.

Functionally, DNA-binding protein that binds to both single- and double-stranded DNA. Binds preferentially to UV-damaged DNA. May be involved in DNA-metabolic processes. The protein is DNA damage-binding protein CMR1 of Chaetomium globosum (strain ATCC 6205 / CBS 148.51 / DSM 1962 / NBRC 6347 / NRRL 1970) (Soil fungus).